The primary structure comprises 122 residues: MIQSQTYLNIADNSGARKIMCIRVLGASNRKCAHIGDVIIAIIKEAVPNMPLEKSEVVRAVVIRTCKEFERDNGMMIRSDDNAAVVIDQEGNPKGTRVFGPVAQELRQLNFTKIVSLAPEVL.

It belongs to the universal ribosomal protein uL14 family. As to quaternary structure, part of the 50S ribosomal subunit.

Its subcellular location is the plastid. It localises to the chloroplast. Its function is as follows. Binds to 23S rRNA. The protein is Large ribosomal subunit protein uL14c of Pinus koraiensis (Korean pine).